Reading from the N-terminus, the 433-residue chain is MIVGLTLYFVLFRSIQYLLVFLTPIRQFDTSTSLLLNELCSSPSEINSYWNKYFWNKLLSWDSVFFIKNITSKNGKPQFEHEYAFSQLWTFFVRLFIKSNNDSIYHALRVGVAIENVLFYLSGIVLYFLTKKIFSQNIRQSQFARTIAKKTSLLFFLTSAAGFLTSIYSEPLSFFFAFVGIWSRECSISVPVLGQFDISWRYWFPYSFISMACFTLASLNRSNCVLLGIYFIFDLIELTKNRKFVKAICFPLLSGSLMFSALLYQQYYLPYKTFCPQRGEWCKSQLFSSIFITKTSLYSYIQSHYWGVGLLKYWTPNNIPNFLFAVPNIIILIYSSIYFSKIYPSYNLKALVWITRALVVIVCFFAHVQILNRIASFLPLHLWYLADRLVKTSDPKKMENPKGDDKIVKFYIYWLAFWIPLQTILFAAFLPPA.

Residue Met1 is a topological domain, cytoplasmic. A helical membrane pass occupies residues 2–22; it reads IVGLTLYFVLFRSIQYLLVFL. Residues 23–109 lie on the Lumenal side of the membrane; the sequence is TPIRQFDTST…NNDSIYHALR (87 aa). N-linked (GlcNAc...) asparagine glycans are attached at residues Asn69 and Asn101. Residues 110–130 traverse the membrane as a helical segment; the sequence is VGVAIENVLFYLSGIVLYFLT. The Cytoplasmic portion of the chain corresponds to 131–161; it reads KKIFSQNIRQSQFARTIAKKTSLLFFLTSAA. The helical transmembrane segment at 162–182 threads the bilayer; it reads GFLTSIYSEPLSFFFAFVGIW. At 183-215 the chain is on the lumenal side; it reads SRECSISVPVLGQFDISWRYWFPYSFISMACFT. Residues 216-236 traverse the membrane as a helical segment; sequence LASLNRSNCVLLGIYFIFDLI. The Cytoplasmic segment spans residues 237–243; that stretch reads ELTKNRK. A helical membrane pass occupies residues 244 to 264; the sequence is FVKAICFPLLSGSLMFSALLY. Residues 265 to 318 are Lumenal-facing; the sequence is QQYYLPYKTFCPQRGEWCKSQLFSSIFITKTSLYSYIQSHYWGVGLLKYWTPNN. Residues 319–339 form a helical membrane-spanning segment; the sequence is IPNFLFAVPNIIILIYSSIYF. The Cytoplasmic segment spans residues 340–350; sequence SKIYPSYNLKA. Residues 351-371 form a helical membrane-spanning segment; the sequence is LVWITRALVVIVCFFAHVQIL. At 372-409 the chain is on the lumenal side; sequence NRIASFLPLHLWYLADRLVKTSDPKKMENPKGDDKIVK. The helical transmembrane segment at 410 to 430 threads the bilayer; the sequence is FYIYWLAFWIPLQTILFAAFL. Residues 431–433 lie on the Cytoplasmic side of the membrane; that stretch reads PPA.

The protein belongs to the PIGV family. In terms of assembly, part of the GPI mannosyltransferase 2 complex composed of GPI18 and PGA1.

It localises to the endoplasmic reticulum membrane. Its pathway is glycolipid biosynthesis; glycosylphosphatidylinositol-anchor biosynthesis. In terms of biological role, mannosyltransferase involved in glycosylphosphatidylinositol-anchor biosynthesis. Responsible for the transfer of the second mannose to the glycosylphosphatidylinositol during GPI precursor assembly. This chain is GPI mannosyltransferase 2 (GPI18), found in Saccharomyces cerevisiae (strain ATCC 204508 / S288c) (Baker's yeast).